Consider the following 20-residue polypeptide: Protein PR-L1 (20 aa).

It belongs to the BetVI family.

The polypeptide is Protein PR-L1 (Lupinus luteus (European yellow lupine)).